Reading from the N-terminus, the 341-residue chain is MAANSGGRSSDADGGPQRHIPVLLREVIAALEPAPGKIILDGTFGAGGYTQAILDQGANVIALDRDPTAIAGGEAMVVANGGRLSLIQSQFSDLAKHAPEDGLDGVVLDIGVSSMQIDEAERGFSFQKNGPLDMRMSASGVSAADVVNRAKVGDLIRIFGFLGEEKQPGRIARAIEKKRAEEPFRTTRDLAGLIEIVTPRKAKDKIHPATRVFQALRVFVNDELGELAQALFAAERSLKPGGRLVVVTFHSLEDRIVKKFFSDRSGKAAGSRHLPMVEDKPAIFENIGKPMIAASDEEAELNPRARSAKLRAGLRTTAPARAADFSIFELPDLASLEKMGG.

S-adenosyl-L-methionine contacts are provided by residues 47–49, Asp64, Phe91, Asp109, and Gln116; that span reads GGY.

The protein belongs to the methyltransferase superfamily. RsmH family.

The protein localises to the cytoplasm. It carries out the reaction cytidine(1402) in 16S rRNA + S-adenosyl-L-methionine = N(4)-methylcytidine(1402) in 16S rRNA + S-adenosyl-L-homocysteine + H(+). Its function is as follows. Specifically methylates the N4 position of cytidine in position 1402 (C1402) of 16S rRNA. This is Ribosomal RNA small subunit methyltransferase H from Agrobacterium fabrum (strain C58 / ATCC 33970) (Agrobacterium tumefaciens (strain C58)).